Reading from the N-terminus, the 566-residue chain is 15-cis-phytoene desaturase, chloroplastic/chromoplastic (566 aa).

The N-terminal 86 residues, 1-86 (MVVFGNVSAA…ASLSASFRSA (86 aa)), are a transit peptide targeting the chloroplast and chromoplast. FAD is bound by residues A103, 122–123 (EA), K130, 147–148 (HI), and Y153. R288 is a binding site for substrate. 2 residues coordinate FAD: I330 and D519. Residue A527 coordinates substrate. Residue M529 participates in FAD binding.

Belongs to the carotenoid/retinoid oxidoreductase family. As to quaternary structure, homotetramer. The cofactor is FAD.

Its subcellular location is the plastid. The protein resides in the chloroplast. It localises to the chromoplast. It is found in the membrane. The catalysed reaction is 2 a plastoquinone + 15-cis-phytoene = 9,9',15-tri-cis-zeta-carotene + 2 a plastoquinol. It participates in carotenoid biosynthesis; lycopene biosynthesis. Functionally, converts phytoene into zeta-carotene via the intermediary of phytofluene by the symmetrical introduction of two double bonds at the C-11 and C-11' positions of phytoene with a concomitant isomerization of two neighboring double bonds at the C9 and C9' positions from trans to cis. The sequence is that of 15-cis-phytoene desaturase, chloroplastic/chromoplastic (PDS) from Arabidopsis thaliana (Mouse-ear cress).